A 258-amino-acid chain; its full sequence is Thiamine thiazole synthase (258 aa).

Residues Ser-36, 55–56, Gly-63, Ile-127, and 153–155 contribute to the NAD(+) site; these read ER and HVD. Fe cation-binding residues include Asp-155 and His-170. Met-224 contacts NAD(+). Arg-234 serves as a coordination point for glycine.

Belongs to the THI4 family. In terms of assembly, homooctamer; tetramer of dimers. It depends on Fe(2+) as a cofactor.

It carries out the reaction hydrogen sulfide + glycine + NAD(+) = ADP-5-ethyl-4-methylthiazole-2-carboxylate + nicotinamide + 3 H2O + H(+). Its pathway is cofactor biosynthesis; thiamine diphosphate biosynthesis. Its function is as follows. Involved in the biosynthesis of the thiazole moiety of thiamine. Catalyzes the conversion of NAD and glycine to adenosine diphosphate 5-(2-hydroxyethyl)-4-methylthiazole-2-carboxylate (ADT), an adenylated thiazole intermediate, using free sulfide as a source of sulfur. In Methanothermobacter thermautotrophicus (strain ATCC 29096 / DSM 1053 / JCM 10044 / NBRC 100330 / Delta H) (Methanobacterium thermoautotrophicum), this protein is Thiamine thiazole synthase.